Here is a 483-residue protein sequence, read N- to C-terminus: Probable cytochrome P450 517A4 (483 aa).

A helical transmembrane segment spans residues 1–21 (MEIVNVLLFLIILFLVKDFVK). Cysteine 429 lines the heme pocket.

This sequence belongs to the cytochrome P450 family. The cofactor is heme.

It is found in the membrane. The chain is Probable cytochrome P450 517A4 (cyp517A4) from Dictyostelium discoideum (Social amoeba).